The primary structure comprises 603 residues: Elongation factor 4 (603 aa).

The 185-residue stretch at 7–191 (DNIRNFSIVA…AIVTRLPPPQ (185 aa)) folds into the tr-type G domain. GTP-binding positions include 19 to 24 (DHGKST) and 138 to 141 (NKVD).

The protein belongs to the TRAFAC class translation factor GTPase superfamily. Classic translation factor GTPase family. LepA subfamily.

Its subcellular location is the cell inner membrane. The catalysed reaction is GTP + H2O = GDP + phosphate + H(+). Its function is as follows. Required for accurate and efficient protein synthesis under certain stress conditions. May act as a fidelity factor of the translation reaction, by catalyzing a one-codon backward translocation of tRNAs on improperly translocated ribosomes. Back-translocation proceeds from a post-translocation (POST) complex to a pre-translocation (PRE) complex, thus giving elongation factor G a second chance to translocate the tRNAs correctly. Binds to ribosomes in a GTP-dependent manner. The sequence is that of Elongation factor 4 from Rhodopseudomonas palustris (strain HaA2).